Here is a 130-residue protein sequence, read N- to C-terminus: Small ribosomal subunit protein uS8 (130 aa).

This sequence belongs to the universal ribosomal protein uS8 family. In terms of assembly, part of the 30S ribosomal subunit. Contacts proteins S5 and S12.

One of the primary rRNA binding proteins, it binds directly to 16S rRNA central domain where it helps coordinate assembly of the platform of the 30S subunit. The protein is Small ribosomal subunit protein uS8 of Photobacterium profundum (strain SS9).